Consider the following 861-residue polypeptide: Protein argonaute-4 (861 aa).

In terms of domain architecture, PAZ spans proline 219 to alanine 338. The Piwi domain occupies leucine 509 to valine 820. Residues aspartate 825 to lysine 846 are disordered.

The protein belongs to the argonaute family. Ago subfamily. As to quaternary structure, interacts with EIF4B, IMP8, PRMT5, TNRC6A and TNRC6B. Interacts with ZFP36. In terms of processing, ubiquitinated on surface-exposed lysines by a SCF-like E3 ubiquitin-protein ligase complex containing ZSWIM8 during target-directed microRNA degradation (TDMD), a process that mediates degradation of microRNAs (miRNAs). Ubiquitination by the SCF-like E3 ubiquitin-protein ligase complex containing ZSWIM8 leads to its subsequent degradation, thereby exposing miRNAs for degradation. ZSWIM8 recognizes and binds AGO4 when it is engaged with a TDMD target.

It localises to the cytoplasm. Its subcellular location is the P-body. In terms of biological role, required for RNA-mediated gene silencing (RNAi). Binds to short RNAs such as microRNAs (miRNAs) and represses the translation of mRNAs which are complementary to them. Lacks endonuclease activity and does not appear to cleave target mRNAs. Also required for RNA-directed transcription and replication of the human hapatitis delta virus (HDV). This chain is Protein argonaute-4 (AGO4), found in Homo sapiens (Human).